A 308-amino-acid polypeptide reads, in one-letter code: MTLNGGGSGAGGSRGGGQERERRRGSTPWGPAPPLHRRSMPVDERDLQAALTPGALTAAAAGTGTQGPRLDWPEDSEDSLSSGGSDSDESVYKVLLLGAPGVGKSALARIFGGVEDGPEAEAAGHTYDRSIVVDGEEASLMVYDIWEQDGGRWLPGHCMAMGDAYVIVYSVTDKGSFEKASELRVQLRRARQTDDVPIILVGNKSDLVRSREVSVDEGRACAVVFDCKFIETSAALHHNVQALFEGVVRQIRLRRDSKEANARRQAGTRRRESLGKKAKRFLGRIVARNSRKMAFRAKSKSCHDLSVL.

Residues 1 to 16 (MTLNGGGSGAGGSRGG) show a composition bias toward gly residues. Positions 1 to 88 (MTLNGGGSGA…SLSSGGSDSD (88 aa)) are disordered. R24 is subject to Omega-N-methylarginine. S26 bears the Phosphoserine mark. A compositionally biased stretch (low complexity) spans 48 to 68 (QAALTPGALTAAAAGTGTQGP). GTP-binding positions include 98–105 (GAPGVGKS) and 203–206 (NKSD). The interval 278–297 (AKRFLGRIVARNSRKMAFRA) is calmodulin-binding.

It belongs to the small GTPase superfamily. RGK family. Interacts with calmodulin preferentially in the inactive, GDP-bound form. Binds CAMKII which is capable of phosphorylating RAD in vitro. Interacts with CAMK2D. Interacts with CACNB2; interaction may be involved in beta-adrenergic regulation of heart rate and contractile force. Interaction with CACNB2 regulates the trafficking of CACNA1C to the cell membrane. In terms of tissue distribution, most abundantly expressed in the heart. Also found in the skeletal muscle and lung. Lesser amounts in placenta and kidney. Also detected in adipose tissue. Overexpressed in muscle of type II diabetic humans.

Its subcellular location is the cell membrane. In terms of biological role, may regulate basal voltage-dependent L-type Ca(2+) currents and be required for beta-adrenergic augmentation of Ca(2+) influx in cardiomyocytes, thereby regulating increases in heart rate and contractile force. May play an important role in cardiac antiarrhythmia via the strong suppression of voltage-gated L-type Ca(2+) currents. Regulates voltage-dependent L-type calcium channel subunit alpha-1C trafficking to the cell membrane. Inhibits cardiac hypertrophy through the calmodulin-dependent kinase II (CaMKII) pathway. Inhibits phosphorylation and activation of CAMK2D. In Homo sapiens (Human), this protein is GTP-binding protein RAD (RRAD).